The following is a 100-amino-acid chain: MAKKSMIARDVKRKKLVERYAAKRKSLIEAFKSAKDPMERLEIHRKIQALPRNCAPNRIRNRCWATGKPRGVYRDFGLCRNQLRSRAHNGELPGVVKSSW.

Belongs to the universal ribosomal protein uS14 family. As to quaternary structure, part of the 30S ribosomal subunit. Contacts proteins S3 and S10.

Its function is as follows. Binds 16S rRNA, required for the assembly of 30S particles and may also be responsible for determining the conformation of the 16S rRNA at the A site. The protein is Small ribosomal subunit protein uS14 of Prochlorococcus marinus (strain NATL2A).